Reading from the N-terminus, the 285-residue chain is Chromatin modification-related protein YNG2 (285 aa).

Disordered regions lie at residues 1-24 (MSFE…SNLK) and 155-201 (RTVA…GANF). The span at 8–24 (DPSSALEQATQDVSNLK) shows a compositional bias: polar residues. Residues 10 to 36 (SSALEQATQDVSNLKSESRFLLEEIRA) are a coiled coil. Residues 224 to 273 (QLYCFCQSVSYGEMVACDGPNCKYEWFHYGCVNLDEPPKGQWYCPECRQE) form a PHD-type zinc finger. Residues Cys227, Cys229, Cys240, Cys245, His251, Cys254, Cys267, and Cys270 each contribute to the Zn(2+) site.

The protein belongs to the ING family. Interacts with H3K4me3 and to a lesser extent with H3K4me2. Component of the NuA4 histone acetyltransferase complex.

It is found in the nucleus. Its function is as follows. Component of the NuA4 histone acetyltransferase complex which is involved in transcriptional activation of selected genes principally by acetylation of nucleosomal histone H4 and H2A. The NuA4 complex is also involved in DNA repair. Involved in cell cycle progression and meiosis. The polypeptide is Chromatin modification-related protein YNG2 (YNG2) (Eremothecium gossypii (strain ATCC 10895 / CBS 109.51 / FGSC 9923 / NRRL Y-1056) (Yeast)).